A 428-amino-acid polypeptide reads, in one-letter code: tRNA modification GTPase MnmE (428 aa).

(6S)-5-formyl-5,6,7,8-tetrahydrofolate is bound by residues Arg20, Glu76, and Arg116. The 140-residue stretch at 212–351 folds into the TrmE-type G domain; it reads GFEVAIIGAP…LVEALQDRLL (140 aa). Asn222 contributes to the K(+) binding site. Residues 222-227, 241-247, and 266-269 each bind GTP; these read NAGKST, SEVAGTT, and DTAG. Ser226 is a Mg(2+) binding site. Residues Ser241, Val243, and Thr246 each coordinate K(+). Thr247 serves as a coordination point for Mg(2+). Lys428 contributes to the (6S)-5-formyl-5,6,7,8-tetrahydrofolate binding site.

The protein belongs to the TRAFAC class TrmE-Era-EngA-EngB-Septin-like GTPase superfamily. TrmE GTPase family. In terms of assembly, homodimer. Heterotetramer of two MnmE and two MnmG subunits. The cofactor is K(+).

Its subcellular location is the cytoplasm. In terms of biological role, exhibits a very high intrinsic GTPase hydrolysis rate. Involved in the addition of a carboxymethylaminomethyl (cmnm) group at the wobble position (U34) of certain tRNAs, forming tRNA-cmnm(5)s(2)U34. This chain is tRNA modification GTPase MnmE, found in Cereibacter sphaeroides (strain ATCC 17025 / ATH 2.4.3) (Rhodobacter sphaeroides).